Reading from the N-terminus, the 781-residue chain is Catenin beta-1 (781 aa).

The segment at 34 to 56 (GIHSGATTTAPSLSGKGNPEDED) is disordered. 10 ARM repeats span residues 141–180 (NYQD…QLSK), 225–264 (REGL…NLLL), 267–306 (EGAK…ILAY), 351–390 (SSNK…NLSD), 391–429 (AATK…NLTC), 432–473 (YKNK…HLTS), 479–519 (EMAQ…NLAL), 521–562 (PANH…QFVE), 584–623 (IHNR…DVAQ), and 625–664 (KEAA…RMSE). Basic and acidic residues predominate over residues 735 to 745 (MDHDMGGHHPG). A disordered region spans residues 735-781 (MDHDMGGHHPGADYPVDGLPDLSHAQDLMDGLPPGDSNQLAWFDTDL).

It belongs to the beta-catenin family. In terms of assembly, interacts with EP-Cadherin/CDH3. Interacts with custos; the interaction is positively regulated by Wnt stimulation. Post-translationally, phosphorylation by gsk3b promotes ubiquitination and subsequent degradation by the proteasome. In terms of processing, ubiquitinated when phosphorylated by gsk3b, leading to its degradation. Expressed at intercalated disks in the heart (at protein level).

The protein localises to the cytoplasm. It localises to the nucleus. Its subcellular location is the cell membrane. In terms of biological role, key downstream component of the canonical Wnt signaling pathway. In the absence of Wnt, forms a complex with axin1, axin2, apc, csnk1a1 and gsk3b that promotes phosphorylation on N-terminal Ser and Thr residues and ubiquitination of ctnnb1 and its subsequent degradation by the proteasome. In the presence of Wnt ligand, ctnnb1 is not ubiquitinated and accumulates in the nucleus, where it acts as a coactivator for transcription factors of the TCF/LEF family, leading to activate Wnt responsive genes. Plays a key role in dorsoventral patterning: in prospective ventral blastomeres, its down-regulation by axin1 and axin2 leads to inhibit the Wnt signaling pathway, while in prospective dorsal blastomeres, degradation of axin results in stabilization and nuclear translocation of ctnnb1. This chain is Catenin beta-1, found in Xenopus laevis (African clawed frog).